Here is a 284-residue protein sequence, read N- to C-terminus: Putative ABC transporter ATP-binding protein sll0385 (284 aa).

The ABC transporter domain occupies 51-278; the sequence is IRVRELSFAY…QTLMESHGLE (228 aa). Residue 84-91 participates in ATP binding; that stretch reads GHNGCGKT.

It belongs to the ABC transporter superfamily.

It is found in the cell inner membrane. Its function is as follows. Probably part of an ABC transporter complex. Responsible for energy coupling to the transport system. This is Putative ABC transporter ATP-binding protein sll0385 from Synechocystis sp. (strain ATCC 27184 / PCC 6803 / Kazusa).